We begin with the raw amino-acid sequence, 570 residues long: Probable diguanylate cyclase DgcQ (570 aa).

2 consecutive transmembrane segments (helical) span residues 20–40 and 360–380; these read FGPG…STLL and IALT…WGVI. One can recognise a GGDEF domain in the interval 428–563; the sequence is QPFSVIQLDL…GRNRICASDA (136 aa). Residue Asp-436 participates in Mg(2+) binding. The substrate site is built by Asn-444, His-449, and Asp-453. Glu-479 contributes to the Mg(2+) binding site. The active-site Proton acceptor is the Glu-479.

Homodimer. It depends on Mg(2+) as a cofactor.

The protein localises to the cell inner membrane. The catalysed reaction is 2 GTP = 3',3'-c-di-GMP + 2 diphosphate. It functions in the pathway glycan metabolism; bacterial cellulose biosynthesis. It participates in purine metabolism; 3',5'-cyclic di-GMP biosynthesis. In terms of biological role, catalyzes the synthesis of cyclic-di-GMP (c-di-GMP) via the condensation of 2 GTP molecules. Cyclic-di-GMP is a second messenger which controls cell surface-associated traits in bacteria. Involved in the regulation of cellulose production. The polypeptide is Probable diguanylate cyclase DgcQ (Salmonella choleraesuis (strain SC-B67)).